A 290-amino-acid chain; its full sequence is MSCYKVMPIAKNIDDELYELNKLLSEKEEFQLDREYQKEILEKERKFLEDLKTANEVFDKRTLMTLFSLLAGKHLTEYIGIVNSGKEAVVFKARKGKFYRAVKVYRVATCDFKTMSKYIQGDPRFHLRKSSRRQIIHAWVEKEFRNLRRASEIINAPKARLRRENVLVMDFVGYRGIPAPKLKDMQDLDWEKYFKIIKESMKKLYEEGELVHGDLSEYNILVKDDEPVFIDFSQSVITQHPLAHPLLIRDCINICNFFRRKRVDCNYKDLYKYITGKEIDPIDEAMIKQL.

The Protein kinase domain maps to 76–290 (TEYIGIVNSG…PIDEAMIKQL (215 aa)). ATP contacts are provided by residues 82–90 (VNSGKEAVV) and Lys103. The Proton acceptor role is filled by Asp214. 2 residues coordinate Mg(2+): Asn219 and Asp231. The 4-aspartylphosphate intermediate role is filled by Asp231.

It belongs to the protein kinase superfamily. RIO-type Ser/Thr kinase family.

It carries out the reaction L-seryl-[protein] + ATP = O-phospho-L-seryl-[protein] + ADP + H(+). It catalyses the reaction L-threonyl-[protein] + ATP = O-phospho-L-threonyl-[protein] + ADP + H(+). The catalysed reaction is ATP + H2O = ADP + phosphate + H(+). Its function is as follows. Despite the protein kinase domain is proposed to act predominantly as an ATPase. This chain is RIO-type serine/threonine-protein kinase Rio1 (rio1), found in Methanocaldococcus jannaschii (strain ATCC 43067 / DSM 2661 / JAL-1 / JCM 10045 / NBRC 100440) (Methanococcus jannaschii).